The sequence spans 282 residues: Pantothenate synthetase (282 aa).

30–37 (MGFLHDGH) contacts ATP. His-37 serves as the catalytic Proton donor. Gln-60 is a (R)-pantoate binding site. Gln-60 serves as a coordination point for beta-alanine. Position 146-149 (146-149 (GQKD)) interacts with ATP. (R)-pantoate is bound at residue Gln-152. Residues Ile-175 and 183-186 (KSSR) each bind ATP.

Belongs to the pantothenate synthetase family. Homodimer.

It is found in the cytoplasm. The catalysed reaction is (R)-pantoate + beta-alanine + ATP = (R)-pantothenate + AMP + diphosphate + H(+). It participates in cofactor biosynthesis; (R)-pantothenate biosynthesis; (R)-pantothenate from (R)-pantoate and beta-alanine: step 1/1. Catalyzes the condensation of pantoate with beta-alanine in an ATP-dependent reaction via a pantoyl-adenylate intermediate. This Campylobacter jejuni (strain RM1221) protein is Pantothenate synthetase.